A 472-amino-acid chain; its full sequence is ATP synthase subunit beta (472 aa).

160-167 (GGAGVGKT) contributes to the ATP binding site.

The protein belongs to the ATPase alpha/beta chains family. F-type ATPases have 2 components, CF(1) - the catalytic core - and CF(0) - the membrane proton channel. CF(1) has five subunits: alpha(3), beta(3), gamma(1), delta(1), epsilon(1). CF(0) has three main subunits: a(1), b(2) and c(9-12). The alpha and beta chains form an alternating ring which encloses part of the gamma chain. CF(1) is attached to CF(0) by a central stalk formed by the gamma and epsilon chains, while a peripheral stalk is formed by the delta and b chains.

It is found in the cell membrane. It catalyses the reaction ATP + H2O + 4 H(+)(in) = ADP + phosphate + 5 H(+)(out). Functionally, produces ATP from ADP in the presence of a proton gradient across the membrane. The catalytic sites are hosted primarily by the beta subunits. This is ATP synthase subunit beta from Lachnoclostridium phytofermentans (strain ATCC 700394 / DSM 18823 / ISDg) (Clostridium phytofermentans).